A 321-amino-acid chain; its full sequence is Ribosomal RNA small subunit methyltransferase H (321 aa).

S-adenosyl-L-methionine-binding positions include 44–46 (GGH), Asp-64, Phe-88, Asp-109, and Gln-116.

Belongs to the methyltransferase superfamily. RsmH family.

It localises to the cytoplasm. It catalyses the reaction cytidine(1402) in 16S rRNA + S-adenosyl-L-methionine = N(4)-methylcytidine(1402) in 16S rRNA + S-adenosyl-L-homocysteine + H(+). Specifically methylates the N4 position of cytidine in position 1402 (C1402) of 16S rRNA. This is Ribosomal RNA small subunit methyltransferase H from Methylobacillus flagellatus (strain ATCC 51484 / DSM 6875 / VKM B-1610 / KT).